A 180-amino-acid polypeptide reads, in one-letter code: Centromere protein M (180 aa).

Component of the CENPA-NAC complex, at least composed of CENPA, CENPC, CENPH, CENPM, CENPN, CENPT and CENPU. The CENPA-NAC complex interacts with the CENPA-CAD complex, composed of CENPI, CENPK, CENPL, CENPO, CENPP, CENPQ, CENPR and CENPS. As to expression, isoform 3 is highly expressed in spleen, and intermediately in heart, prostate and ovary. Isoform 3 is highly expressed in resting CD19 B-cells and B-lineage chronic lymphocytic leukemia (B-CLL) cells and weakly expressed in activated B-cells. Isoform 1 is selectively expressed in activated CD19 cells and weakly in resting CD19 B-cells.

It localises to the nucleus. The protein resides in the cytoplasm. The protein localises to the chromosome. It is found in the centromere. Its subcellular location is the kinetochore. Functionally, component of the CENPA-NAC (nucleosome-associated) complex, a complex that plays a central role in assembly of kinetochore proteins, mitotic progression and chromosome segregation. The CENPA-NAC complex recruits the CENPA-CAD (nucleosome distal) complex and may be involved in incorporation of newly synthesized CENPA into centromeres. The protein is Centromere protein M (CENPM) of Homo sapiens (Human).